Consider the following 593-residue polypeptide: Probable E3 ubiquitin-protein ligase ARI2 (593 aa).

The interval 120–334 (SMMSCDICVE…ISGHSCGRFQ (215 aa)) is TRIAD supradomain. Residues cysteine 124, cysteine 127, cysteine 141, histidine 143, cysteine 146, cysteine 149, cysteine 168, cysteine 173, cysteine 215, cysteine 221, cysteine 237, cysteine 239, cysteine 244, cysteine 247, histidine 252, cysteine 257, cysteine 284, and cysteine 287 each contribute to the Zn(2+) site. The RING-type 1 zinc finger occupies 124-173 (CDICVEDVPGYQLTRMDCGHSFCNNCWTGHFTVKINEGQSKRIICMAHKC). Residues 195 to 257 (EKFDRFLLES…SSQAHSPCSC (63 aa)) form an IBR-type zinc finger. The segment at 284–312 (CPKCHKPVEKNGGCNLVTCLCRQSFCWLC) adopts an RING-type 2; atypical zinc-finger fold. Residue cysteine 297 is part of the active site. Positions 302, 304, 309, 312, 320, and 330 each coordinate Zn(2+).

This sequence belongs to the RBR family. Ariadne subfamily. Zn(2+) serves as cofactor. In terms of tissue distribution, ubiquitous.

The enzyme catalyses [E2 ubiquitin-conjugating enzyme]-S-ubiquitinyl-L-cysteine + [acceptor protein]-L-lysine = [E2 ubiquitin-conjugating enzyme]-L-cysteine + [acceptor protein]-N(6)-ubiquitinyl-L-lysine.. It participates in protein modification; protein ubiquitination. Functionally, might act as an E3 ubiquitin-protein ligase, or as part of E3 complex, which accepts ubiquitin from specific E2 ubiquitin-conjugating enzymes and then transfers it to substrates. The chain is Probable E3 ubiquitin-protein ligase ARI2 (ARI2) from Arabidopsis thaliana (Mouse-ear cress).